Here is a 393-residue protein sequence, read N- to C-terminus: tRNA (guanine-N(7)-)-methyltransferase (393 aa).

The S-adenosyl-L-methionine site is built by glutamate 124, glutamate 149, and aspartate 176. Residue aspartate 232 participates in substrate binding.

This sequence belongs to the class I-like SAM-binding methyltransferase superfamily. TrmB family.

It carries out the reaction guanosine(46) in tRNA + S-adenosyl-L-methionine = N(7)-methylguanosine(46) in tRNA + S-adenosyl-L-homocysteine. The protein operates within tRNA modification; N(7)-methylguanine-tRNA biosynthesis. Catalyzes the formation of N(7)-methylguanine at position 46 (m7G46) in tRNA. The polypeptide is tRNA (guanine-N(7)-)-methyltransferase (Helicobacter pylori (strain ATCC 700392 / 26695) (Campylobacter pylori)).